The following is a 707-amino-acid chain: D-(-)-3-hydroxybutyrate oligomer hydrolase (707 aa).

The signal sequence occupies residues 1 to 32; sequence MASVFKVRSASGHVPVVRTLAAMMAVTVVLTA. Serine 321 functions as the Charge relay system in the catalytic mechanism.

It belongs to the D-(-)-3-hydroxybutyrate oligomer hydrolase family.

The protein resides in the secreted. It catalyses the reaction (3R)-hydroxybutanoate dimer + H2O = 2 (R)-3-hydroxybutanoate + H(+). Its pathway is lipid metabolism; butanoate metabolism. Its function is as follows. Participates in the degradation of poly-3-hydroxybutyrate (PHB). It works downstream of poly(3-hydroxybutyrate) depolymerase, hydrolyzing D(-)-3-hydroxybutyrate oligomers of various length (3HB-oligomers) into 3HB-monomers. The protein is D-(-)-3-hydroxybutyrate oligomer hydrolase of Paraburkholderia xenovorans (strain LB400).